An 88-amino-acid polypeptide reads, in one-letter code: Small ribosomal subunit protein uS15 (88 aa).

This sequence belongs to the universal ribosomal protein uS15 family. Part of the 30S ribosomal subunit. Forms a bridge to the 50S subunit in the 70S ribosome, contacting the 23S rRNA.

In terms of biological role, one of the primary rRNA binding proteins, it binds directly to 16S rRNA where it helps nucleate assembly of the platform of the 30S subunit by binding and bridging several RNA helices of the 16S rRNA. Its function is as follows. Forms an intersubunit bridge (bridge B4) with the 23S rRNA of the 50S subunit in the ribosome. In Borreliella burgdorferi (strain ATCC 35210 / DSM 4680 / CIP 102532 / B31) (Borrelia burgdorferi), this protein is Small ribosomal subunit protein uS15.